A 280-amino-acid polypeptide reads, in one-letter code: DegV domain-containing protein M6_Spy1440 (280 aa).

Positions 3-280 (WKIVTDSGCD…DGGLLMGYEI (278 aa)) constitute a DegV domain. Hexadecanoate-binding residues include Ser63 and Ser91.

Its function is as follows. May bind long-chain fatty acids, such as palmitate, and may play a role in lipid transport or fatty acid metabolism. In Streptococcus pyogenes serotype M6 (strain ATCC BAA-946 / MGAS10394), this protein is DegV domain-containing protein M6_Spy1440.